We begin with the raw amino-acid sequence, 891 residues long: Schlafen family member 5 (891 aa).

A Glycyl lysine isopeptide (Lys-Gly) (interchain with G-Cter in SUMO2) cross-link involves residue Lys-59. 578–585 (GLPGSGKT) provides a ligand contact to ATP.

Belongs to the Schlafen family. Subgroup III subfamily.

Functionally, may have a role in hematopoietic cell differentiation. The chain is Schlafen family member 5 (SLFN5) from Homo sapiens (Human).